A 151-amino-acid polypeptide reads, in one-letter code: 3-dehydroquinate dehydratase (151 aa).

Residue Tyr24 is the Proton acceptor of the active site. Substrate is bound by residues Asn76, His82, and Asp89. Catalysis depends on His102, which acts as the Proton donor. Substrate contacts are provided by residues 103–104 (VS) and Arg113.

The protein belongs to the type-II 3-dehydroquinase family. Homododecamer.

The catalysed reaction is 3-dehydroquinate = 3-dehydroshikimate + H2O. The protein operates within metabolic intermediate biosynthesis; chorismate biosynthesis; chorismate from D-erythrose 4-phosphate and phosphoenolpyruvate: step 3/7. Catalyzes a trans-dehydration via an enolate intermediate. The chain is 3-dehydroquinate dehydratase from Rhodopseudomonas palustris (strain HaA2).